Reading from the N-terminus, the 253-residue chain is tRNA pseudouridine synthase A (253 aa).

The Nucleophile role is filled by Asp-52. Tyr-111 is a substrate binding site.

It belongs to the tRNA pseudouridine synthase TruA family. In terms of assembly, homodimer.

It carries out the reaction uridine(38/39/40) in tRNA = pseudouridine(38/39/40) in tRNA. Formation of pseudouridine at positions 38, 39 and 40 in the anticodon stem and loop of transfer RNAs. This chain is tRNA pseudouridine synthase A, found in Methylobacterium radiotolerans (strain ATCC 27329 / DSM 1819 / JCM 2831 / NBRC 15690 / NCIMB 10815 / 0-1).